The chain runs to 278 residues: NAD kinase (278 aa).

Catalysis depends on aspartate 56, which acts as the Proton acceptor. NAD(+) contacts are provided by residues 56-57, 132-133, arginine 158, aspartate 160, and 171-176; these read DG, NE, and TAYNKS.

Belongs to the NAD kinase family. A divalent metal cation is required as a cofactor.

It is found in the cytoplasm. It catalyses the reaction NAD(+) + ATP = ADP + NADP(+) + H(+). Involved in the regulation of the intracellular balance of NAD and NADP, and is a key enzyme in the biosynthesis of NADP. Catalyzes specifically the phosphorylation on 2'-hydroxyl of the adenosine moiety of NAD to yield NADP. The polypeptide is NAD kinase (Streptococcus pyogenes serotype M1).